The sequence spans 698 residues: Iron-sulfur clusters transporter ATM1, mitochondrial (698 aa).

The N-terminal 23 residues, 1–23 (MIPQLLQRSSRACPRYNPALYRL), are a transit peptide targeting the mitochondrion. Topologically, residues 24-113 (STTSQQRPGL…PKDDWGTKLR (90 aa)) are mitochondrial matrix. Residues 32-63 (GLTQTFWTSAPRREQPRTPTDSKPTTTKPSAV) are disordered. Residues 48-61 (RTPTDSKPTTTKPS) are compositionally biased toward low complexity. Residues 114–135 (VSLAVSLLIGAKVLNVQVPFYF) form a helical membrane-spanning segment. In terms of domain architecture, ABC transmembrane type-1 spans 114–404 (VSLAVSLLIG…LGSVYRELRQ (291 aa)). Residues 136–158 (KSIVDSMNIDVAAVGGTATTVAG) lie on the Mitochondrial intermembrane side of the membrane. The chain crosses the membrane as a helical span at residues 159-182 (AMILAYGASRIGATVFQELRNAVF). Residues 183–231 (ASVAQNAIRKVACNVFDHLLRLDLTFHLSKQTGGLTRALDRGTKGISFI) are Mitochondrial matrix-facing. A helical transmembrane segment spans residues 232–255 (LSSMVFHVLPTALEISMVCGILTY). Residue Asn-256 is a topological domain, mitochondrial intermembrane. A helical transmembrane segment spans residues 257-277 (YGAKFAALTVLTMVSYTAFTI). Topologically, residues 278-343 (WTTAWRTKFR…NSIKVATSLA (66 aa)) are mitochondrial matrix. Glutathione-binding positions include 283 to 287 (RTKFR) and 346 to 349 (NSGQ). A helical membrane pass occupies residues 344 to 362 (LLNSGQNIIFSSALTGMMY). At 363–377 (LAANGVAEGTLTVGD) the chain is on the mitochondrial intermembrane side. The helical transmembrane segment at 378–399 (LVMVNQLVFQLSVPLNFLGSVY) threads the bilayer. Residue Gly-396 participates in glutathione binding. Residues 400-698 (RELRQSLLDM…EEENDEQKKN (299 aa)) lie on the Mitochondrial matrix side of the membrane. Residues 439-675 (IKFENVNFAY…DGVYAELWSA (237 aa)) form the ABC transporter domain. Residues Tyr-448 and 472-483 (GPSGCGKSTLLR) contribute to the ATP site. Residues 679-698 (MFGEDGKEKSEEENDEQKKN) are disordered. Basic and acidic residues predominate over residues 682-698 (EDGKEKSEEENDEQKKN).

The protein belongs to the ABC transporter superfamily. ABCB family. Heavy Metal importer (TC 3.A.1.210) subfamily. As to quaternary structure, homodimer.

It is found in the mitochondrion inner membrane. Its function is as follows. Performs an essential function in the generation of cytoplasmic iron-sulfur proteins by mediating the ATP-dependent export of Fe/S cluster precursors synthesized by NFS1 and other mitochondrial proteins. Hydrolyzes ATP. Binds glutathione and may function by transporting a glutathione-conjugated iron-sulfur compound. The sequence is that of Iron-sulfur clusters transporter ATM1, mitochondrial from Gibberella zeae (strain ATCC MYA-4620 / CBS 123657 / FGSC 9075 / NRRL 31084 / PH-1) (Wheat head blight fungus).